The primary structure comprises 359 residues: N-acetyl-gamma-glutamyl-phosphate reductase (359 aa).

Residue Cys-162 is part of the active site.

The protein belongs to the NAGSA dehydrogenase family. Type 1 subfamily.

It localises to the cytoplasm. The enzyme catalyses N-acetyl-L-glutamate 5-semialdehyde + phosphate + NADP(+) = N-acetyl-L-glutamyl 5-phosphate + NADPH + H(+). The protein operates within amino-acid biosynthesis; L-arginine biosynthesis; N(2)-acetyl-L-ornithine from L-glutamate: step 3/4. In terms of biological role, catalyzes the NADPH-dependent reduction of N-acetyl-5-glutamyl phosphate to yield N-acetyl-L-glutamate 5-semialdehyde. The polypeptide is N-acetyl-gamma-glutamyl-phosphate reductase (Prochlorococcus marinus (strain NATL2A)).